Here is an 82-residue protein sequence, read N- to C-terminus: Penaeidin-3b (82 aa).

The N-terminal stretch at methionine 1–glycine 19 is a signal peptide. Glutamine 20 is subject to Pyrrolidone carboxylic acid. Intrachain disulfides connect cysteine 51–cysteine 66, cysteine 55–cysteine 73, and cysteine 67–cysteine 74. Serine 81 bears the Serine amide mark.

Belongs to the penaeidin family. As to expression, higher expression in hemocytes and to a lesser extent in heart, testis, gills, intestine, lymphoid organ and hepatopancreas. Traces in eyes and subcuticular epithelium. Not present in the brain.

It is found in the cytoplasmic granule. Its function is as follows. Antibacterial activity against M.luteus and E.coli bacteria. Antifungal activity against N.crassa and F.oxysporum. Presents chitin-binding activity. The polypeptide is Penaeidin-3b (Penaeus vannamei (Whiteleg shrimp)).